We begin with the raw amino-acid sequence, 590 residues long: Potassium-transporting ATPase potassium-binding subunit (590 aa).

4 consecutive transmembrane segments (helical) span residues 3–23 (AFLL…RPLG), 63–83 (HYAL…YALQ), 134–154 (GLAV…IALI), and 177–197 (LYVL…QGAI). The interval 217–244 (PKTDAQGNPIKDAQGNPVTEKATTQKQT) is disordered. 8 consecutive transmembrane segments (helical) span residues 284 to 304 (FVQM…FGAM), 312 to 332 (WAVL…EMWA), 359 to 379 (FGVV…CGAV), 388 to 408 (ALGG…FGGV), 411 to 431 (GLYG…LMIG), 450 to 470 (SIAI…AVLA), 515 to 535 (VALG…VLAM), and 558 to 578 (LFVV…YIPA).

Belongs to the KdpA family. In terms of assembly, the system is composed of three essential subunits: KdpA, KdpB and KdpC.

It is found in the cell inner membrane. Functionally, part of the high-affinity ATP-driven potassium transport (or Kdp) system, which catalyzes the hydrolysis of ATP coupled with the electrogenic transport of potassium into the cytoplasm. This subunit binds the periplasmic potassium ions and delivers the ions to the membrane domain of KdpB through an intramembrane tunnel. The sequence is that of Potassium-transporting ATPase potassium-binding subunit from Ralstonia nicotianae (strain ATCC BAA-1114 / GMI1000) (Ralstonia solanacearum).